Here is a 191-residue protein sequence, read N- to C-terminus: Rubrerythrin (191 aa).

Positions 1–146 (MKSLKGSRTE…DFARNIKEGR (146 aa)) constitute a Ferritin-like diiron domain. Residues Glu20, Glu53, Glu94, Glu97, Glu128, His131, Cys158, Cys161, Cys174, and Cys177 each contribute to the Fe(3+) site. The 39-residue stretch at 153 to 191 (ATKWRCRNCGYVHEGTGAPELCPACAHPKAHFELLGINW) folds into the Rubredoxin-like domain.

Homodimer. Possesses two rubredoxin-like centers and two non-sulfur oxo-bridged di-iron centers per dimer. Requires Fe(3+) as cofactor.

Its subcellular location is the cytoplasm. Functionally, may provide oxidative stress protection via catalytic reduction of intracellular hydrogen peroxide. This Nitratidesulfovibrio vulgaris (strain ATCC 29579 / DSM 644 / CCUG 34227 / NCIMB 8303 / VKM B-1760 / Hildenborough) (Desulfovibrio vulgaris) protein is Rubrerythrin (rbr).